We begin with the raw amino-acid sequence, 191 residues long: Protein GrpE (191 aa).

It belongs to the GrpE family. In terms of assembly, homodimer.

Its subcellular location is the cytoplasm. Functionally, participates actively in the response to hyperosmotic and heat shock by preventing the aggregation of stress-denatured proteins, in association with DnaK and GrpE. It is the nucleotide exchange factor for DnaK and may function as a thermosensor. Unfolded proteins bind initially to DnaJ; upon interaction with the DnaJ-bound protein, DnaK hydrolyzes its bound ATP, resulting in the formation of a stable complex. GrpE releases ADP from DnaK; ATP binding to DnaK triggers the release of the substrate protein, thus completing the reaction cycle. Several rounds of ATP-dependent interactions between DnaJ, DnaK and GrpE are required for fully efficient folding. This is Protein GrpE from Listeria monocytogenes serotype 4a (strain HCC23).